The sequence spans 269 residues: MVMSQGTYTFLTCFAGFWLIWGLIVLLCCFCSFLRRRLKRRQEERLREQNLRALELEPLELEGSLAGSPPGLAPPPPPHRSRLEAPVHAHSHVHVHPLLHHGPAPPHAHPHPHHHALPHPPPPHLAVPPRPWSYPRQAESDMSKPPCYEEAVLMAEPPPPYSEVLTDTRGLYRKIVTPFLSRRDSAEKQEQPPPSYKPLFLDRGYTSALHLPSAPRPAAPCPALCLQAERSRRVFPSWTDSELSSREPLEHGAWRLPVSIPLFGRTTAV.

Residues 1–9 (MVMSQGTYT) are Extracellular-facing. The interval 1–44 (MVMSQGTYTFLTCFAGFWLIWGLIVLLCCFCSFLRRRLKRRQEE) is required for interaction with NMDA receptors. A required for membrane localization region spans residues 2 to 39 (VMSQGTYTFLTCFAGFWLIWGLIVLLCCFCSFLRRRLK). Residues 10–30 (FLTCFAGFWLIWGLIVLLCCF) form a helical; Signal-anchor for type III membrane protein membrane-spanning segment. The Cytoplasmic segment spans residues 31-269 (CSFLRRRLKR…IPLFGRTTAV (239 aa)). Disordered stretches follow at residues 63-83 (GSLA…RSRL) and 97-121 (PLLH…PHPP). The residue at position 64 (serine 64) is a Phosphoserine. Residues 108 to 117 (AHPHPHHHAL) show a composition bias toward basic residues. Residues 146-166 (PCYEEAVLMAEPPPPYSEVLT) are required for internalization. Residues 146–269 (PCYEEAVLMA…IPLFGRTTAV (124 aa)) form a required for apoptosis induction region. The PDZ-binding motif lies at 267 to 269 (TAV).

Forms a complex with NMDA receptor zeta subunit GRIN1 and epsilon subunit GRIN2B. Interacts with GRIN2B. Interacts with GRIN1; the interaction is reduced upon NMDA receptor activity. Found in a postsynaptic membrane complex with DLG4 and GRIN1. Interacts with DLG4 (via PDZ3 domain and to lesser degree via PDZ2 domain). Interacts with JUN. Found in a complex with JUN and FBXW7. Interacts with JUN and FBXW7; the interaction inhibits ubiquitination-mediated JUN degradation promoting its phosphorylation and transcriptional activity. Interacts with SRC. Post-translationally, palmitoylated. Tyrosine phosphorylated, possibly by SRC. In terms of tissue distribution, highly expressed in brain, moderately expressed in lymph nodes and T cells and low expression in thymus and spleen. Expressed in single positive progenitor thymocytes, particularly in CD8 single positive thymocytes.

The protein localises to the cell membrane. It localises to the postsynaptic cell membrane. Its subcellular location is the postsynaptic density membrane. The protein resides in the cytoplasm. It is found in the perinuclear region. The protein localises to the synapse. It localises to the cell projection. Its subcellular location is the dendrite. The protein resides in the nucleus. Its function is as follows. Acts as a synapse-to-nucleus messenger to promote NMDA receptor-mediated excitotoxicity in neurons in a JUN-dependent manner. Inhibits ubiquitination-mediated degradation and promotes phosphorylation and transcriptional activity of transcription factor JUN. Might play a redundant role in the regulation of T cell receptor signaling. Might promote apoptosis in T cells. This is Proline-rich protein 7 (Prr7) from Mus musculus (Mouse).